The chain runs to 297 residues: 6-dehydroglucose reductase (297 aa).

The NADP(+) site is built by W20, R21, and D49. The Proton donor role is filled by Y54. D-glucose-binding residues include Y54, K98, H129, and R130. S159, N160, Q181, S211, L213, G215, G261, T262, N263, and R267 together coordinate NADP(+).

This sequence belongs to the aldo/keto reductase family. In terms of assembly, homotrimer.

The catalysed reaction is D-glucose + NADP(+) = 6-dehydro-D-glucose + NADPH + H(+). Part of the sulfoquinovose monooxygenase (sulfo-SMO) pathway, a D-sulfoquinovose degradation pathway that enables the complete utilization of all carbons within sulfoquinovose (SQ) with concomitant production of inorganic sulfite. Catalyzes the NADP-dependent reduction of 6-dehydro-D-glucose to D-glucose. Cannot use NADH. This Agrobacterium fabrum (strain C58 / ATCC 33970) (Agrobacterium tumefaciens (strain C58)) protein is 6-dehydroglucose reductase.